The primary structure comprises 227 residues: PKHD-type hydroxylase Bcen_3557 (227 aa).

Residues lysine 78–serine 178 enclose the Fe2OG dioxygenase domain. The Fe cation site is built by histidine 96, aspartate 98, and histidine 159. Residue arginine 169 coordinates 2-oxoglutarate.

It depends on Fe(2+) as a cofactor. Requires L-ascorbate as cofactor.

The protein is PKHD-type hydroxylase Bcen_3557 of Burkholderia orbicola (strain AU 1054).